A 493-amino-acid chain; its full sequence is uncharacterized protein (493 aa).

Ser328 carries the post-translational modification Phosphoserine. Polar residues predominate over residues 466–486 (AESNSGRGQNSKTKTTSVNLS). The tract at residues 466-493 (AESNSGRGQNSKTKTTSVNLSRNKRTRT) is disordered.

This is an uncharacterized protein from Schizosaccharomyces pombe (strain 972 / ATCC 24843) (Fission yeast).